The following is a 218-amino-acid chain: Protein Syd (218 aa).

The protein belongs to the Syd family.

It is found in the cell inner membrane. Its function is as follows. Interacts with the SecY protein in vivo. May bind preferentially to an uncomplexed state of SecY, thus functioning either as a chelating agent for excess SecY in the cell or as a regulatory factor that negatively controls the translocase function. This chain is Protein Syd, found in Shewanella denitrificans (strain OS217 / ATCC BAA-1090 / DSM 15013).